A 390-amino-acid polypeptide reads, in one-letter code: Na(+)/H(+) antiporter NhaA 2 (390 aa).

11 helical membrane passes run 23–43, 63–83, 100–120, 129–149, 158–178, 181–201, 208–228, 265–285, 293–313, 331–351, and 362–382; these read IVLIACAALALLIANSPLAAA, LHLWINDGLMAVFFFVVGLEI, LPVLAAVAGMAVPALIYLAIT, GWAIPSATDIAFAIGVLALVG, LFLLTVAIVDDLGAVVVIALF, SGLKLAWLGASALILAALVLV, ALLPYLAGAVALWYTVLHSGI, GFVIVPLFGLANAGVALGADF, LGIAMGLLLGKQFGILGSILV, LWGIALLCGIGFTMSLFIAGL, and EAKLGILGGSLVSALAGLLVL.

This sequence belongs to the NhaA Na(+)/H(+) (TC 2.A.33) antiporter family.

The protein localises to the cell inner membrane. The enzyme catalyses Na(+)(in) + 2 H(+)(out) = Na(+)(out) + 2 H(+)(in). Its function is as follows. Na(+)/H(+) antiporter that extrudes sodium in exchange for external protons. The chain is Na(+)/H(+) antiporter NhaA 2 from Novosphingobium aromaticivorans (strain ATCC 700278 / DSM 12444 / CCUG 56034 / CIP 105152 / NBRC 16084 / F199).